A 105-amino-acid chain; its full sequence is UPF0148 protein PYRAB12700 (105 aa).

This sequence belongs to the UPF0148 family.

In Pyrococcus abyssi (strain GE5 / Orsay), this protein is UPF0148 protein PYRAB12700.